We begin with the raw amino-acid sequence, 88 residues long: Large ribosomal subunit protein bL27 (88 aa).

The segment at 1–23 is disordered; sequence MAHKKGTGSTRNGRDSNSKRLGV.

This sequence belongs to the bacterial ribosomal protein bL27 family.

The polypeptide is Large ribosomal subunit protein bL27 (Synechococcus sp. (strain CC9902)).